A 318-amino-acid chain; its full sequence is NADH-ubiquinone oxidoreductase chain 1 (318 aa).

8 consecutive transmembrane segments (helical) span residues 2-22, 68-88, 100-120, 147-167, 172-192, 217-237, 253-273, and 294-314; these read FMIN…FLTL, ISMF…MWIP, LGVL…LWSG, AIIL…TLII, VWLI…TLAE, AGPF…MNIF, ELYT…FLWI, and LPLT…LSSI.

The protein belongs to the complex I subunit 1 family.

The protein resides in the mitochondrion inner membrane. The catalysed reaction is a ubiquinone + NADH + 5 H(+)(in) = a ubiquinol + NAD(+) + 4 H(+)(out). In terms of biological role, core subunit of the mitochondrial membrane respiratory chain NADH dehydrogenase (Complex I) that is believed to belong to the minimal assembly required for catalysis. Complex I functions in the transfer of electrons from NADH to the respiratory chain. The immediate electron acceptor for the enzyme is believed to be ubiquinone. In Ovis aries (Sheep), this protein is NADH-ubiquinone oxidoreductase chain 1 (MT-ND1).